The primary structure comprises 274 residues: Dermonecrotic toxin SdSicTox-betaIIB2i (274 aa).

H5 is a catalytic residue. Residues E25 and D27 each contribute to the Mg(2+) site. The active-site Nucleophile is H41. 2 disulfides stabilise this stretch: C45–C51 and C47–C190. Position 85 (D85) interacts with Mg(2+).

It belongs to the arthropod phospholipase D family. Class II subfamily. The cofactor is Mg(2+). In terms of tissue distribution, expressed by the venom gland.

It is found in the secreted. It catalyses the reaction an N-(acyl)-sphingosylphosphocholine = an N-(acyl)-sphingosyl-1,3-cyclic phosphate + choline. The catalysed reaction is an N-(acyl)-sphingosylphosphoethanolamine = an N-(acyl)-sphingosyl-1,3-cyclic phosphate + ethanolamine. The enzyme catalyses a 1-acyl-sn-glycero-3-phosphocholine = a 1-acyl-sn-glycero-2,3-cyclic phosphate + choline. It carries out the reaction a 1-acyl-sn-glycero-3-phosphoethanolamine = a 1-acyl-sn-glycero-2,3-cyclic phosphate + ethanolamine. Its function is as follows. Dermonecrotic toxins cleave the phosphodiester linkage between the phosphate and headgroup of certain phospholipids (sphingolipid and lysolipid substrates), forming an alcohol (often choline) and a cyclic phosphate. This toxin acts on sphingomyelin (SM). It may also act on ceramide phosphoethanolamine (CPE), lysophosphatidylcholine (LPC) and lysophosphatidylethanolamine (LPE), but not on lysophosphatidylserine (LPS), and lysophosphatidylglycerol (LPG). It acts by transphosphatidylation, releasing exclusively cyclic phosphate products as second products. Induces dermonecrosis, hemolysis, increased vascular permeability, edema, inflammatory response, and platelet aggregation. The polypeptide is Dermonecrotic toxin SdSicTox-betaIIB2i (Sicarius cf. damarensis (strain GJB-2008) (Six-eyed sand spider)).